Consider the following 469-residue polypeptide: Dynein axonemal assembly factor 3 (469 aa).

The interval 313 to 356 (RSPLNEDPPNTSSSCCQSTESRKTEENSQSDPSASQTQPVEHSP) is disordered. 2 stretches are compositionally biased toward polar residues: residues 320-331 (PPNTSSSCCQST) and 339-356 (NSQSDPSASQTQPVEHSP).

Belongs to the DNAAF3 family. As to expression, mainly expressed in cell types that express axonemal dyneins.

The protein localises to the cytoplasm. Its subcellular location is the dynein axonemal particle. Its function is as follows. Required for the assembly of axonemal inner and outer dynein arms. Involved in preassembly of dyneins into complexes before their transport into cilia. This chain is Dynein axonemal assembly factor 3 (dnaaf3), found in Danio rerio (Zebrafish).